Here is a 276-residue protein sequence, read N- to C-terminus: NADPH-dependent 7-cyano-7-deazaguanine reductase (276 aa).

83 to 85 (IES) serves as a coordination point for substrate. 85–86 (SK) provides a ligand contact to NADPH. C184 acts as the Thioimide intermediate in catalysis. D191 acts as the Proton donor in catalysis. Residue 223–224 (HE) participates in substrate binding. An NADPH-binding site is contributed by 252–253 (RG).

The protein belongs to the GTP cyclohydrolase I family. QueF type 2 subfamily. Homodimer.

The protein localises to the cytoplasm. The catalysed reaction is 7-aminomethyl-7-carbaguanine + 2 NADP(+) = 7-cyano-7-deazaguanine + 2 NADPH + 3 H(+). It functions in the pathway tRNA modification; tRNA-queuosine biosynthesis. In terms of biological role, catalyzes the NADPH-dependent reduction of 7-cyano-7-deazaguanine (preQ0) to 7-aminomethyl-7-deazaguanine (preQ1). The chain is NADPH-dependent 7-cyano-7-deazaguanine reductase from Pseudomonas paraeruginosa (strain DSM 24068 / PA7) (Pseudomonas aeruginosa (strain PA7)).